Here is a 268-residue protein sequence, read N- to C-terminus: Putative type I specificity subunit S.MpnORF365P (268 aa).

This sequence belongs to the type-I restriction system S methylase family. The methyltransferase is composed of M and S polypeptides.

In terms of biological role, the specificity (S) subunit of a type I methyltransferase (MTase); this subunit dictates DNA sequence specificity. The single R subunit has multiple frameshifts and is probably not expressed. The sequence is that of Putative type I specificity subunit S.MpnORF365P from Mycoplasma pneumoniae (strain ATCC 29342 / M129 / Subtype 1) (Mycoplasmoides pneumoniae).